A 148-amino-acid polypeptide reads, in one-letter code: Deoxyuridine 5'-triphosphate nucleotidohydrolase (148 aa).

Residues 68 to 70, Asn-81, 85 to 87, and Lys-95 contribute to the substrate site; these read RSG and TID.

It belongs to the dUTPase family. The cofactor is Mg(2+).

The catalysed reaction is dUTP + H2O = dUMP + diphosphate + H(+). Its pathway is pyrimidine metabolism; dUMP biosynthesis; dUMP from dCTP (dUTP route): step 2/2. This enzyme is involved in nucleotide metabolism: it produces dUMP, the immediate precursor of thymidine nucleotides and it decreases the intracellular concentration of dUTP so that uracil cannot be incorporated into DNA. This Rickettsia canadensis (strain McKiel) protein is Deoxyuridine 5'-triphosphate nucleotidohydrolase.